We begin with the raw amino-acid sequence, 365 residues long: Protein SGT1 homolog (365 aa).

Ala-2 carries the N-acetylalanine modification. 3 TPR repeats span residues 11–44 (SQRF…KPDD), 45–78 (AQYY…NPNN), and 79–112 (STAM…DIET). The 90-residue stretch at 169–258 (QSKIKYDWYQ…PEAVRWEKLE (90 aa)) folds into the CS domain. Position 265 is a phosphothreonine (Thr-265). Residues 276–365 (LYPSSSPYTR…PPDDMEWKKY (90 aa)) form the SGS domain. At Ser-281 the chain carries Phosphoserine. A Phosphothreonine modification is found at Thr-284. Lys-295 participates in a covalent cross-link: Glycyl lysine isopeptide (Lys-Gly) (interchain with G-Cter in SUMO1); alternate. Lys-295 participates in a covalent cross-link: Glycyl lysine isopeptide (Lys-Gly) (interchain with G-Cter in SUMO2); alternate. Position 331 is a phosphoserine (Ser-331).

It belongs to the SGT1 family. Probably associates with SCF (SKP1-CUL1-F-box protein) complex through interaction with SKP1. Interacts with S100A6. Interacts with HSP90. Phosphorylated at Ser-281 and Ser-331, dephosphorylation promotes nuclear translocation, most likely due to disruption of the SUGT1-HSP90 complex.

It is found in the cytoplasm. Its subcellular location is the nucleus. May play a role in ubiquitination and subsequent proteasomal degradation of target proteins. The sequence is that of Protein SGT1 homolog from Homo sapiens (Human).